The chain runs to 364 residues: Small ribosomal subunit biogenesis GTPase RsgA (364 aa).

Positions 101-264 constitute a CP-type G domain; the sequence is KGLVEKPGVP…VIDTPGLREL (164 aa). Residues 154 to 157 and 206 to 214 each bind GTP; these read NKSD and GSSGAGKST. Zn(2+) is bound by residues C288, C293, H295, and C301. Residues 339–364 are disordered; it reads QVAQKRKRKTIPRQGKRWRREHGDGQ. Residues 342–358 show a composition bias toward basic residues; the sequence is QKRKRKTIPRQGKRWRR.

Belongs to the TRAFAC class YlqF/YawG GTPase family. RsgA subfamily. As to quaternary structure, monomer. Associates with 30S ribosomal subunit, binds 16S rRNA. Requires Zn(2+) as cofactor.

The protein resides in the cytoplasm. One of several proteins that assist in the late maturation steps of the functional core of the 30S ribosomal subunit. Helps release RbfA from mature subunits. May play a role in the assembly of ribosomal proteins into the subunit. Circularly permuted GTPase that catalyzes slow GTP hydrolysis, GTPase activity is stimulated by the 30S ribosomal subunit. This chain is Small ribosomal subunit biogenesis GTPase RsgA, found in Syntrophotalea carbinolica (strain DSM 2380 / NBRC 103641 / GraBd1) (Pelobacter carbinolicus).